We begin with the raw amino-acid sequence, 116 residues long: Flagellar transcriptional regulator FlhD (116 aa).

The protein belongs to the FlhD family. As to quaternary structure, homodimer; disulfide-linked. Forms a heterohexamer composed of two FlhC and four FlhD subunits. Each FlhC binds a FlhD dimer, forming a heterotrimer, and a hexamer assembles by dimerization of two heterotrimers.

The protein localises to the cytoplasm. Its function is as follows. Functions in complex with FlhC as a master transcriptional regulator that regulates transcription of several flagellar and non-flagellar operons by binding to their promoter region. Activates expression of class 2 flagellar genes, including fliA, which is a flagellum-specific sigma factor that turns on the class 3 genes. Also regulates genes whose products function in a variety of physiological pathways. The polypeptide is Flagellar transcriptional regulator FlhD (Pectobacterium carotovorum subsp. carotovorum (strain PC1)).